The chain runs to 238 residues: Probable transcriptional regulatory protein SPD_1725 (238 aa).

Belongs to the TACO1 family. YeeN subfamily.

The protein localises to the cytoplasm. In Streptococcus pneumoniae serotype 2 (strain D39 / NCTC 7466), this protein is Probable transcriptional regulatory protein SPD_1725.